The sequence spans 302 residues: Myeloid-associated differentiation marker-like protein 2 (302 aa).

MARVEL domains follow at residues 13–149 (AIWS…AKPG) and 154–298 (YMAT…RLRI). The next 7 helical transmembrane spans lie at 45 to 65 (AYGTFCVFVWAFCFALTILIV), 87 to 107 (AYAMLATLMTLTAAVIYPMYF), 124 to 144 (LAVSVCAALLFVTYAVEVFLT), 158 to 178 (ASGLLKVVQAFVACVIFGALA), 191 to 211 (WCVAVYSFCFGVTMVVVILNI), 225 to 245 (FVVIYTVLAILMYISAAVIWP), and 273 to 293 (LAVTIFTHINLILYIADLIYT).

The protein belongs to the MAL family.

The protein resides in the membrane. The sequence is that of Myeloid-associated differentiation marker-like protein 2 (myadml2) from Xenopus laevis (African clawed frog).